A 457-amino-acid polypeptide reads, in one-letter code: DDB1- and CUL4-associated factor 10 (457 aa).

4 WD repeats span residues 65-104, 108-146, 150-189, and 195-234; these read RTHGAVFNLEYSPDGSVLTVACEQTEVLLFDPVSSKHIKT, AHEDCVNNIRFLDNRMFATCSDDTTIALWDLRKLNSKVC, GHTSWVKNIEYDTNTRLLVTSGFDGNVIIWDTNRCTEDGC, and FHTRFLMRMRLTPDCSKMLISTSSGYLLILHELDLTKSLE. Low complexity predominate over residues 246–265; the sequence is TASTSDMTSTSSDTRPSSSP. The interval 246–304 is disordered; it reads TASTSDMTSTSSDTRPSSSPCHNSDLGPLFEKHMSRSSQREGASPRNSLEVLTPEVPGE. Over residues 281-292 the composition is skewed to polar residues; that stretch reads RSSQREGASPRN. 3 WD repeats span residues 306–346, 368–406, and 424–457; these read DRGN…QEGA, VGRGYIKELCFSPDGRMIASPYAYGIRLLGFDSQCKELV, and SHKDVVLTTKFSPTHCQIASGCLSGRVTLYQPKF.

This sequence belongs to the WD repeat DCAF10 family.

It participates in protein modification; protein ubiquitination. May function as a substrate receptor for CUL4-DDB1 E3 ubiquitin-protein ligase complex. The protein is DDB1- and CUL4-associated factor 10 (dcaf10) of Xenopus tropicalis (Western clawed frog).